The primary structure comprises 345 residues: Tropomodulin-4 (345 aa).

The segment at 42-63 is disordered; sequence NMLLPAGLRQRDQTKKSPTGPL.

Belongs to the tropomodulin family. In terms of assembly, binds to the N-terminus of tropomyosin and to actin. In terms of tissue distribution, highly expressed in skeletal muscle.

Its subcellular location is the cytoplasm. It is found in the cytoskeleton. Blocks the elongation and depolymerization of the actin filaments at the pointed end. The Tmod/TM complex contributes to the formation of the short actin protofilament, which in turn defines the geometry of the membrane skeleton. The chain is Tropomodulin-4 (TMOD4) from Homo sapiens (Human).